A 638-amino-acid polypeptide reads, in one-letter code: Zinc finger protein 143 (638 aa).

Residue methionine 1 is modified to N-acetylmethionine. Residue lysine 213 forms a Glycyl lysine isopeptide (Lys-Gly) (interchain with G-Cter in SUMO2) linkage. 4 consecutive C2H2-type zinc fingers follow at residues 237-261 (FRCE…ERSH), 267-291 (YQCE…VRTH), 297-321 (YRCS…IRTH), and 327-351 (FKCP…VRTH). Threonine 352 bears the Phosphothreonine mark. 3 C2H2-type zinc fingers span residues 357 to 381 (YYCT…VRIH), 387 to 411 (YVCT…HVVH), and 417 to 440 (YNCN…RTAH). Lysine 406 participates in a covalent cross-link: Glycyl lysine isopeptide (Lys-Gly) (interchain with G-Cter in SUMO2).

This sequence belongs to the GLI C2H2-type zinc-finger protein family. As to quaternary structure, interacts with CHD8. Forms a complex with HCFC1 and ZNF143. As to expression, expressed in all tissues tested, with the strongest expression in ovary.

It localises to the nucleus. Transcriptional activator. Activates the gene for selenocysteine tRNA (tRNAsec). Binds to the SPH motif of small nuclear RNA (snRNA) gene promoters. Participates in efficient U6 RNA polymerase III transcription via its interaction with CHD8. In complex with HCFC1 and ZNF143, regulates the expression of several genes, including AP2S1, ESCO2, OPHN1, RBL1, UBXN8 and ZNF32. The sequence is that of Zinc finger protein 143 (ZNF143) from Homo sapiens (Human).